The sequence spans 301 residues: Glycine--tRNA ligase alpha subunit (301 aa).

Belongs to the class-II aminoacyl-tRNA synthetase family. In terms of assembly, tetramer of two alpha and two beta subunits.

The protein resides in the cytoplasm. The enzyme catalyses tRNA(Gly) + glycine + ATP = glycyl-tRNA(Gly) + AMP + diphosphate. This is Glycine--tRNA ligase alpha subunit from Shewanella loihica (strain ATCC BAA-1088 / PV-4).